The following is a 488-amino-acid chain: Transmembrane protein 39A (488 aa).

N-linked (GlcNAc...) asparagine glycans are attached at residues N31 and N39. 8 consecutive transmembrane segments (helical) span residues 72-92, 110-130, 154-174, 182-202, 287-307, 319-339, 420-440, and 446-466; these read SLLF…IQYI, TSLN…VMLA, VLIS…CWTL, SVLN…LCCF, EVLF…LCFV, CEHL…QLLP, LLNL…YSLL, and NHTL…FKLL.

The protein belongs to the TMEM39 family. Interacts with SACM1L, SEC23A and SEC24A. In terms of assembly, (Microbial infection) Interacts with encephalomyocarditis virus (EMCV) major capsid proteins VP1 and VP2. In terms of tissue distribution, up-regulated in brain tumor glioblastoma multiforme cells (at protein level).

The protein localises to the endoplasmic reticulum membrane. Its function is as follows. Regulates autophagy by controlling the spatial distribution and levels of the intracellular phosphatidylinositol 4-phosphate (PtdIns(4)P) pools. Modulates (PtdIns(4)P) levels by regulating the ER-to-Golgi trafficking of the phosphatidylinositide phosphatase SACM1L. (Microbial infection) Positively regulates the replication of encephalomyocarditis virus (EMCV) via autophagy-dependent pathway. This is Transmembrane protein 39A (TMEM39A) from Homo sapiens (Human).